A 257-amino-acid polypeptide reads, in one-letter code: UPF0246 protein Spea_1078 (257 aa).

Belongs to the UPF0246 family.

The sequence is that of UPF0246 protein Spea_1078 from Shewanella pealeana (strain ATCC 700345 / ANG-SQ1).